The primary structure comprises 214 residues: Thymidylate kinase (214 aa).

12–19 lines the ATP pocket; the sequence is GGEGAGKS.

The protein belongs to the thymidylate kinase family.

It carries out the reaction dTMP + ATP = dTDP + ADP. Functionally, phosphorylation of dTMP to form dTDP in both de novo and salvage pathways of dTTP synthesis. The polypeptide is Thymidylate kinase (Gluconobacter oxydans (strain 621H) (Gluconobacter suboxydans)).